The sequence spans 170 residues: Adenine phosphoribosyltransferase (170 aa).

The protein belongs to the purine/pyrimidine phosphoribosyltransferase family. In terms of assembly, homodimer.

The protein localises to the cytoplasm. The enzyme catalyses AMP + diphosphate = 5-phospho-alpha-D-ribose 1-diphosphate + adenine. The protein operates within purine metabolism; AMP biosynthesis via salvage pathway; AMP from adenine: step 1/1. Functionally, catalyzes a salvage reaction resulting in the formation of AMP, that is energically less costly than de novo synthesis. The polypeptide is Adenine phosphoribosyltransferase (Bacillus mycoides (strain KBAB4) (Bacillus weihenstephanensis)).